A 429-amino-acid polypeptide reads, in one-letter code: Serine carboxypeptidase-like (429 aa).

3 disulfides stabilise this stretch: C58-C298, C226-C241, and C264-C269. Residue N76 is glycosylated (N-linked (GlcNAc...) asparagine). Residue S148 is part of the active site. The active site involves D336. Residue C339 coordinates substrate. H393 is an active-site residue. 2 N-linked (GlcNAc...) asparagine glycosylation sites follow: N414 and N417.

Belongs to the peptidase S10 family. As to expression, abundant in germinated embryos composed of leaf, root, and scutellum.

The protein is Serine carboxypeptidase-like (CBP31) of Oryza sativa subsp. japonica (Rice).